The primary structure comprises 332 residues: Glyceraldehyde-3-phosphate dehydrogenase (332 aa).

NAD(+) is bound by residues 12 to 13 (RI), aspartate 34, lysine 78, and threonine 120. Residues 149–151 (SCT), threonine 180, 209–210 (TG), and arginine 232 contribute to the D-glyceraldehyde 3-phosphate site. The Nucleophile role is filled by cysteine 150. Asparagine 314 serves as a coordination point for NAD(+).

It belongs to the glyceraldehyde-3-phosphate dehydrogenase family. Homotetramer.

Its subcellular location is the cytoplasm. The catalysed reaction is D-glyceraldehyde 3-phosphate + phosphate + NAD(+) = (2R)-3-phospho-glyceroyl phosphate + NADH + H(+). The protein operates within carbohydrate degradation; glycolysis; pyruvate from D-glyceraldehyde 3-phosphate: step 1/5. Catalyzes the oxidative phosphorylation of glyceraldehyde 3-phosphate (G3P) to 1,3-bisphosphoglycerate (BPG) using the cofactor NAD. The first reaction step involves the formation of a hemiacetal intermediate between G3P and a cysteine residue, and this hemiacetal intermediate is then oxidized to a thioester, with concomitant reduction of NAD to NADH. The reduced NADH is then exchanged with the second NAD, and the thioester is attacked by a nucleophilic inorganic phosphate to produce BPG. This Buchnera aphidicola subsp. Schizaphis graminum (strain Sg) protein is Glyceraldehyde-3-phosphate dehydrogenase (gapA).